The primary structure comprises 143 residues: Regulator of ribonuclease activity B (143 aa).

Positions 113-143 (EDPNAEEDEYGDDGEFFDDEDEADFNNAKVH) are disordered. Residues 115–136 (PNAEEDEYGDDGEFFDDEDEAD) show a composition bias toward acidic residues.

Belongs to the RraB family. As to quaternary structure, interacts with the C-terminal region of Rne.

The protein localises to the cytoplasm. Globally modulates RNA abundance by binding to RNase E (Rne) and regulating its endonucleolytic activity. Can modulate Rne action in a substrate-dependent manner by altering the composition of the degradosome. The sequence is that of Regulator of ribonuclease activity B from Haemophilus ducreyi (strain 35000HP / ATCC 700724).